A 568-amino-acid chain; its full sequence is Phosphoribosylaminoimidazole carboxylase (568 aa).

Residues 110 to 298 enclose the ATP-grasp domain; the sequence is KNHLIKHDVA…QFEAHVRAVT (189 aa). 138 to 193 is an ATP binding site; the sequence is GEKFGYPYMLKSRTLAYDGRGNFVVKDKSYCEKALEFLKDRPLYAEKWCPFTKELA.

The protein in the C-terminal section; belongs to the AIR carboxylase family. Class I subfamily.

It carries out the reaction 5-amino-1-(5-phospho-D-ribosyl)imidazole-4-carboxylate + H(+) = 5-amino-1-(5-phospho-beta-D-ribosyl)imidazole + CO2. The protein operates within purine metabolism; IMP biosynthesis via de novo pathway; 5-amino-1-(5-phospho-D-ribosyl)imidazole-4-carboxylate from 5-amino-1-(5-phospho-D-ribosyl)imidazole (carboxylase route): step 1/1. This Candida albicans (strain SC5314 / ATCC MYA-2876) (Yeast) protein is Phosphoribosylaminoimidazole carboxylase (ADE2).